Reading from the N-terminus, the 101-residue chain is NAD(P)H-quinone oxidoreductase subunit 4L, chloroplastic (101 aa).

The next 3 helical transmembrane spans lie at I2–I22, M32–F52, and I61–V81.

It belongs to the complex I subunit 4L family. As to quaternary structure, NDH is composed of at least 16 different subunits, 5 of which are encoded in the nucleus.

The protein resides in the plastid. Its subcellular location is the chloroplast thylakoid membrane. It carries out the reaction a plastoquinone + NADH + (n+1) H(+)(in) = a plastoquinol + NAD(+) + n H(+)(out). The enzyme catalyses a plastoquinone + NADPH + (n+1) H(+)(in) = a plastoquinol + NADP(+) + n H(+)(out). In terms of biological role, NDH shuttles electrons from NAD(P)H:plastoquinone, via FMN and iron-sulfur (Fe-S) centers, to quinones in the photosynthetic chain and possibly in a chloroplast respiratory chain. The immediate electron acceptor for the enzyme in this species is believed to be plastoquinone. Couples the redox reaction to proton translocation, and thus conserves the redox energy in a proton gradient. This is NAD(P)H-quinone oxidoreductase subunit 4L, chloroplastic from Phaseolus vulgaris (Kidney bean).